The chain runs to 350 residues: Ion-translocating oxidoreductase complex subunit D (350 aa).

Transmembrane regions (helical) follow at residues 15–35, 36–56, 67–87, 88–108, and 122–142; these read QTQT…LAQT, WFFG…ALGA, PIKP…IGLS, LPPL…IIIA, and PAMV…TSWL. The residue at position 186 (Thr-186) is an FMN phosphoryl threonine. Transmembrane regions (helical) follow at residues 213–233, 242–262, 264–284, and 299–316; these read WGGI…LFLL, IPGA…LMTP, ATAT…AFFI, and LVYG…RRFG.

Belongs to the NqrB/RnfD family. In terms of assembly, the complex is composed of six subunits: RnfA, RnfB, RnfC, RnfD, RnfE and RnfG. Requires FMN as cofactor.

It localises to the cell inner membrane. Functionally, part of a membrane-bound complex that couples electron transfer with translocation of ions across the membrane. The sequence is that of Ion-translocating oxidoreductase complex subunit D from Aeromonas salmonicida (strain A449).